Reading from the N-terminus, the 448-residue chain is UDP-N-acetylmuramoylalanine--D-glutamate ligase (448 aa).

112 to 118 (GSNAKST) is an ATP binding site.

This sequence belongs to the MurCDEF family.

It localises to the cytoplasm. The enzyme catalyses UDP-N-acetyl-alpha-D-muramoyl-L-alanine + D-glutamate + ATP = UDP-N-acetyl-alpha-D-muramoyl-L-alanyl-D-glutamate + ADP + phosphate + H(+). Its pathway is cell wall biogenesis; peptidoglycan biosynthesis. In terms of biological role, cell wall formation. Catalyzes the addition of glutamate to the nucleotide precursor UDP-N-acetylmuramoyl-L-alanine (UMA). The polypeptide is UDP-N-acetylmuramoylalanine--D-glutamate ligase (Acinetobacter baumannii (strain ATCC 17978 / DSM 105126 / CIP 53.77 / LMG 1025 / NCDC KC755 / 5377)).